The chain runs to 633 residues: DNA mismatch repair protein MutL (633 aa).

The protein belongs to the DNA mismatch repair MutL/HexB family.

Its function is as follows. This protein is involved in the repair of mismatches in DNA. It is required for dam-dependent methyl-directed DNA mismatch repair. May act as a 'molecular matchmaker', a protein that promotes the formation of a stable complex between two or more DNA-binding proteins in an ATP-dependent manner without itself being part of a final effector complex. This Pseudomonas putida (strain W619) protein is DNA mismatch repair protein MutL.